The following is a 448-amino-acid chain: Glucose-6-phosphate isomerase (448 aa).

Glu-290 acts as the Proton donor in catalysis. Catalysis depends on residues His-311 and Lys-425.

This sequence belongs to the GPI family.

It localises to the cytoplasm. It catalyses the reaction alpha-D-glucose 6-phosphate = beta-D-fructose 6-phosphate. It participates in carbohydrate biosynthesis; gluconeogenesis. It functions in the pathway carbohydrate degradation; glycolysis; D-glyceraldehyde 3-phosphate and glycerone phosphate from D-glucose: step 2/4. Its function is as follows. Catalyzes the reversible isomerization of glucose-6-phosphate to fructose-6-phosphate. The sequence is that of Glucose-6-phosphate isomerase from Lactococcus lactis subsp. cremoris (strain SK11).